A 266-amino-acid chain; its full sequence is 3-methyl-2-oxobutanoate hydroxymethyltransferase (266 aa).

2 residues coordinate Mg(2+): aspartate 45 and aspartate 84. Residues 45 to 46 (DS), aspartate 84, and lysine 113 each bind 3-methyl-2-oxobutanoate. Glutamate 115 serves as a coordination point for Mg(2+). Residue glutamate 183 is the Proton acceptor of the active site.

Belongs to the PanB family. Homodecamer; pentamer of dimers. Requires Mg(2+) as cofactor.

The protein localises to the cytoplasm. The catalysed reaction is 3-methyl-2-oxobutanoate + (6R)-5,10-methylene-5,6,7,8-tetrahydrofolate + H2O = 2-dehydropantoate + (6S)-5,6,7,8-tetrahydrofolate. It participates in cofactor biosynthesis; (R)-pantothenate biosynthesis; (R)-pantoate from 3-methyl-2-oxobutanoate: step 1/2. Its function is as follows. Catalyzes the reversible reaction in which hydroxymethyl group from 5,10-methylenetetrahydrofolate is transferred onto alpha-ketoisovalerate to form ketopantoate. This is 3-methyl-2-oxobutanoate hydroxymethyltransferase from Coxiella burnetii (strain CbuG_Q212) (Coxiella burnetii (strain Q212)).